The sequence spans 66 residues: Large ribosomal subunit protein bL35 (66 aa).

Over residues 1-26 (MPKMKTHRGSAKRFKKTGSGKLKRSH) the composition is skewed to basic residues. A disordered region spans residues 1 to 48 (MPKMKTHRGSAKRFKKTGSGKLKRSHAYTSHLFANKSQKQKRKLRKSA).

The protein belongs to the bacterial ribosomal protein bL35 family.

This Bacillus licheniformis (strain ATCC 14580 / DSM 13 / JCM 2505 / CCUG 7422 / NBRC 12200 / NCIMB 9375 / NCTC 10341 / NRRL NRS-1264 / Gibson 46) protein is Large ribosomal subunit protein bL35.